The primary structure comprises 102 residues: MKIVVLGDKDTVLGFRLAGVHETYSFEDTTHEIERVRNKIMELIEREDVGVILITERLAQRVEIPDVAFPIILQIPDKYGSLYGEEQLREIVRRAIGVEIKR.

The protein belongs to the V-ATPase F subunit family. As to quaternary structure, has multiple subunits with at least A(3), B(3), C, D, E, F, H, I and proteolipid K(x).

It is found in the cell membrane. Functionally, component of the A-type ATP synthase that produces ATP from ADP in the presence of a proton gradient across the membrane. The chain is A-type ATP synthase subunit F from Thermococcus sibiricus (strain DSM 12597 / MM 739).